The primary structure comprises 246 residues: Dihydroorotate dehydrogenase B (NAD(+)), electron transfer subunit (246 aa).

Residues 3-95 (MEYFKGKVKE…IGPLGNGFDI (93 aa)) enclose the FAD-binding FR-type domain. Residues 48 to 51 (RPIS) and 70 to 71 (GT) each bind FAD. The [2Fe-2S] cluster site is built by C213, C218, C221, and C233.

The protein belongs to the PyrK family. In terms of assembly, heterotetramer of 2 PyrK and 2 PyrD type B subunits. [2Fe-2S] cluster is required as a cofactor. It depends on FAD as a cofactor.

It functions in the pathway pyrimidine metabolism; UMP biosynthesis via de novo pathway; orotate from (S)-dihydroorotate (NAD(+) route): step 1/1. Responsible for channeling the electrons from the oxidation of dihydroorotate from the FMN redox center in the PyrD type B subunit to the ultimate electron acceptor NAD(+). The sequence is that of Dihydroorotate dehydrogenase B (NAD(+)), electron transfer subunit from Clostridium perfringens (strain 13 / Type A).